A 443-amino-acid chain; its full sequence is ATP-dependent protease ATPase subunit HslU (443 aa).

ATP is bound by residues Ile18, Gly60–Glu65, Asp256, Glu321, and Arg393.

It belongs to the ClpX chaperone family. HslU subfamily. In terms of assembly, a double ring-shaped homohexamer of HslV is capped on each side by a ring-shaped HslU homohexamer. The assembly of the HslU/HslV complex is dependent on binding of ATP.

The protein localises to the cytoplasm. ATPase subunit of a proteasome-like degradation complex; this subunit has chaperone activity. The binding of ATP and its subsequent hydrolysis by HslU are essential for unfolding of protein substrates subsequently hydrolyzed by HslV. HslU recognizes the N-terminal part of its protein substrates and unfolds these before they are guided to HslV for hydrolysis. In Vibrio parahaemolyticus serotype O3:K6 (strain RIMD 2210633), this protein is ATP-dependent protease ATPase subunit HslU.